We begin with the raw amino-acid sequence, 356 residues long: Dihydroorotate dehydrogenase (quinone) (356 aa).

FMN contacts are provided by residues 66 to 70 (AGFDK) and Thr90. Substrate is bound at residue Lys70. 115–119 (NRMGF) is a substrate binding site. 2 residues coordinate FMN: Asn143 and Asn176. Position 176 (Asn176) interacts with substrate. Ser179 functions as the Nucleophile in the catalytic mechanism. Position 181 (Asn181) interacts with substrate. Residues Lys212 and Thr240 each coordinate FMN. Residue 241-242 (NT) coordinates substrate. Residues Gly264, Gly293, and 314–315 (YT) each bind FMN.

This sequence belongs to the dihydroorotate dehydrogenase family. Type 2 subfamily. As to quaternary structure, monomer. The cofactor is FMN.

Its subcellular location is the cell membrane. The catalysed reaction is (S)-dihydroorotate + a quinone = orotate + a quinol. It functions in the pathway pyrimidine metabolism; UMP biosynthesis via de novo pathway; orotate from (S)-dihydroorotate (quinone route): step 1/1. Catalyzes the conversion of dihydroorotate to orotate with quinone as electron acceptor. In Mycobacterium leprae (strain TN), this protein is Dihydroorotate dehydrogenase (quinone) (pyrD).